Reading from the N-terminus, the 59-residue chain is Antibacterial peptide enbocin (59 aa).

A signal peptide spans 1–20 (MNFTRIIFFLFVVVFATASG). A propeptide is located at residue K21. S58 is subject to Serine amide.

It belongs to the cecropin family.

Its subcellular location is the secreted. Functionally, has antibacterial activity against Gram-positive and Gram-negative bacteria. The chain is Antibacterial peptide enbocin from Bombyx mori (Silk moth).